The sequence spans 247 residues: Adenosylcobinamide-GDP ribazoletransferase (247 aa).

5 helical membrane passes run 34–54, 59–79, 113–133, 138–158, and 194–214; these read IITF…VFMV, CGVP…TGGF, GGLA…ELAL, ILAL…LLMY, and VLLP…AIFI.

It belongs to the CobS family. Mg(2+) serves as cofactor.

It localises to the cell inner membrane. It catalyses the reaction alpha-ribazole + adenosylcob(III)inamide-GDP = adenosylcob(III)alamin + GMP + H(+). The catalysed reaction is alpha-ribazole 5'-phosphate + adenosylcob(III)inamide-GDP = adenosylcob(III)alamin 5'-phosphate + GMP + H(+). Its pathway is cofactor biosynthesis; adenosylcobalamin biosynthesis; adenosylcobalamin from cob(II)yrinate a,c-diamide: step 7/7. In terms of biological role, joins adenosylcobinamide-GDP and alpha-ribazole to generate adenosylcobalamin (Ado-cobalamin). Also synthesizes adenosylcobalamin 5'-phosphate from adenosylcobinamide-GDP and alpha-ribazole 5'-phosphate. This is Adenosylcobinamide-GDP ribazoletransferase from Shigella boydii serotype 4 (strain Sb227).